The primary structure comprises 180 residues: Stathmin-3 (180 aa).

Residues cysteine 22 and cysteine 24 are each lipidated (S-palmitoyl cysteine). The SLD domain occupies 38 to 180; sequence GDMEVKQLDK…NKEQREEMSG (143 aa). A phosphoserine mark is found at serine 50, serine 60, serine 65, serine 68, serine 72, serine 73, and serine 81. Over residues 60-74 the composition is skewed to low complexity; the sequence is SPSDLSPESPVLSSP. The disordered stretch occupies residues 60–81; sequence SPSDLSPESPVLSSPPKRKDAS. Residues 75-179 are a coiled coil; that stretch reads PKRKDASLEE…RNKEQREEMS (105 aa).

The protein belongs to the stathmin family. In terms of assembly, interacts with STAT3. Interacts with CLU (secreted form); this interaction may act as an important modulator during neuronal differentiation. Post-translationally, N-terminal palmitoylation promotes specific anchoring to the cytosolic leaflet of Golgi membranes and subsequent vesicular trafficking along dendrites and axons. Neuronal Stathmins are substrates for palmitoyltransferases ZDHHC3, ZDHHC7 and ZDHHC15. As to expression, neuron specific.

It is found in the golgi apparatus. It localises to the cell projection. The protein localises to the growth cone. Its subcellular location is the axon. The protein resides in the cytoplasm. It is found in the cytosol. In terms of biological role, exhibits microtubule-destabilizing activity, which is antagonized by STAT3. In Mus musculus (Mouse), this protein is Stathmin-3 (Stmn3).